A 511-amino-acid chain; its full sequence is Aldehyde dehydrogenase X, mitochondrial (511 aa).

The N-terminal 11 residues, 1–11 (PRLFALHHSAT), are a transit peptide targeting the mitochondrion. Lys45 is modified (N6-acetyllysine). Lys46 bears the N6-acetyllysine; alternate mark. Lys46 is subject to N6-succinyllysine; alternate. Residue Lys75 is modified to N6-succinyllysine. 256-261 (GSTKVG) is a binding site for NAD(+). Catalysis depends on Glu279, which acts as the Proton acceptor. Cys313 (nucleophile) is an active-site residue. Lys377, Lys393, and Lys420 each carry N6-acetyllysine; alternate. Residues Lys377, Lys393, and Lys420 each carry the N6-succinyllysine; alternate modification. Lys423 bears the N6-acetyllysine mark.

The protein belongs to the aldehyde dehydrogenase family. As to quaternary structure, homotetramer.

The protein resides in the mitochondrion matrix. The enzyme catalyses an aldehyde + NAD(+) + H2O = a carboxylate + NADH + 2 H(+). Its pathway is alcohol metabolism; ethanol degradation; acetate from ethanol: step 2/2. Its function is as follows. ALDHs play a major role in the detoxification of alcohol-derived acetaldehyde. They are involved in the metabolism of corticosteroids, biogenic amines, neurotransmitters, and lipid peroxidation. In the cornea, this enzyme may help in the absorption of the damaging UV-B, as well as in the detoxification of the UV-induced peroxidic aldehydes. This chain is Aldehyde dehydrogenase X, mitochondrial (ALDH1B1), found in Bos taurus (Bovine).